The chain runs to 428 residues: Chaperone SurA (428 aa).

A signal peptide spans 1-20 (MKNWKTLLLGIAMIANTSFA). PpiC domains are found at residues 171–272 (STEL…KVND) and 282–382 (VTEV…ELLD).

The protein resides in the periplasm. The catalysed reaction is [protein]-peptidylproline (omega=180) = [protein]-peptidylproline (omega=0). Functionally, chaperone involved in the correct folding and assembly of outer membrane proteins. Recognizes specific patterns of aromatic residues and the orientation of their side chains, which are found more frequently in integral outer membrane proteins. May act in both early periplasmic and late outer membrane-associated steps of protein maturation. This is Chaperone SurA from Salmonella choleraesuis (strain SC-B67).